We begin with the raw amino-acid sequence, 622 residues long: Threonine--tRNA ligase (622 aa).

The interval 1 to 141 is editing domain; the sequence is MKTLLIHSDY…SRKITTERKE (141 aa). Residues 199–498 form a catalytic region; that stretch reads PHVKYIKEKE…TLENKPPALP (300 aa). Residues C291, H343, and H467 each coordinate Zn(2+).

It belongs to the class-II aminoacyl-tRNA synthetase family. Homodimer. Requires Zn(2+) as cofactor.

It localises to the cytoplasm. It catalyses the reaction tRNA(Thr) + L-threonine + ATP = L-threonyl-tRNA(Thr) + AMP + diphosphate + H(+). Its function is as follows. Catalyzes the attachment of threonine to tRNA(Thr) in a two-step reaction: L-threonine is first activated by ATP to form Thr-AMP and then transferred to the acceptor end of tRNA(Thr). Also edits incorrectly charged L-seryl-tRNA(Thr). The sequence is that of Threonine--tRNA ligase from Methanococcus maripaludis (strain C5 / ATCC BAA-1333).